The sequence spans 89 residues: Meiosis expressed gene 1 protein homolog (89 aa).

Belongs to the MEIG1 family.

The polypeptide is Meiosis expressed gene 1 protein homolog (Nematostella vectensis (Starlet sea anemone)).